The following is a 654-amino-acid chain: Spindle assembly abnormal protein 6 homolog (654 aa).

Residues 39–91 (VHRKDLVIRLTDDTDPFFLYNLVISEEDFQSLKLQQGLLVDFLAFPQKFIDLL) form the PISA domain. The stretch at 175 to 471 (TRQLHITQET…QLLKNNEKLI (297 aa)) forms a coiled coil. S509 bears the Phosphoserine mark. Positions 568 to 589 (ASIDGQPGAAVNRPCSNDKENG) are disordered. At S612 the chain carries Phosphoserine. A compositionally biased stretch (low complexity) spans 634-644 (SKPTVLPSSSS). Residues 634–654 (SKPTVLPSSSSAYFPGQLPSS) form a disordered region. Position 654 is a phosphoserine (S654).

In terms of assembly, nine homodimers form a cartwheel structure with an internal diameter of 23 nm and radial spokes connecting to the microtubule triplets. Forms a complex with CPAP and STIL. Interacts with FBXW5. Interacts with NUP62 and TUBG1 at the centrosome. Interacts with CENATAC; the interaction increases with CENATAC acetylation. Interacts with FZR1; the interaction is regulated by CENATAC and leads to SASS6 proteasomal degradation. Post-translationally, ubiquitinated by the SCF(FBXW5) E3 ubiquitin-protein ligase complex during S phase, leading to its degradation and preventing centriole reduplication. Ubiquitinated by the anaphase promoting complex/cyclosome (APC/C) E3 ubiquitin-protein ligase complex, leading to its degradation and preventing centriole reduplication.

The protein resides in the cytoplasm. Its subcellular location is the cytoskeleton. It is found in the microtubule organizing center. It localises to the centrosome. The protein localises to the centriole. Functionally, central scaffolding component of the centrioles ensuring their 9-fold symmetry. Required for centrosome biogenesis and duplication. Required both for mother-centriole-dependent centriole duplication and deuterosome-dependent centriole amplification in multiciliated cells. Not required for centriole formation in embryonic stem cells but necessary to maintain centriole architecture. Required for the recruitment of STIL to the procentriole and for STIL-mediated centriole amplification. The protein is Spindle assembly abnormal protein 6 homolog of Mus musculus (Mouse).